The chain runs to 307 residues: 4-hydroxy-3-methylbut-2-enyl diphosphate reductase (307 aa).

C13 lines the [4Fe-4S] cluster pocket. H42 and H75 together coordinate (2E)-4-hydroxy-3-methylbut-2-enyl diphosphate. Dimethylallyl diphosphate-binding residues include H42 and H75. 2 residues coordinate isopentenyl diphosphate: H42 and H75. [4Fe-4S] cluster is bound at residue C97. Residue H125 participates in (2E)-4-hydroxy-3-methylbut-2-enyl diphosphate binding. H125 is a binding site for dimethylallyl diphosphate. An isopentenyl diphosphate-binding site is contributed by H125. The active-site Proton donor is the E127. Residue T165 participates in (2E)-4-hydroxy-3-methylbut-2-enyl diphosphate binding. C195 is a [4Fe-4S] cluster binding site. Residues S223, S224, N225, and S267 each contribute to the (2E)-4-hydroxy-3-methylbut-2-enyl diphosphate site. Residues S223, S224, N225, and S267 each coordinate dimethylallyl diphosphate. 4 residues coordinate isopentenyl diphosphate: S223, S224, N225, and S267.

It belongs to the IspH family. Requires [4Fe-4S] cluster as cofactor.

The enzyme catalyses isopentenyl diphosphate + 2 oxidized [2Fe-2S]-[ferredoxin] + H2O = (2E)-4-hydroxy-3-methylbut-2-enyl diphosphate + 2 reduced [2Fe-2S]-[ferredoxin] + 2 H(+). It catalyses the reaction dimethylallyl diphosphate + 2 oxidized [2Fe-2S]-[ferredoxin] + H2O = (2E)-4-hydroxy-3-methylbut-2-enyl diphosphate + 2 reduced [2Fe-2S]-[ferredoxin] + 2 H(+). The protein operates within isoprenoid biosynthesis; dimethylallyl diphosphate biosynthesis; dimethylallyl diphosphate from (2E)-4-hydroxy-3-methylbutenyl diphosphate: step 1/1. It participates in isoprenoid biosynthesis; isopentenyl diphosphate biosynthesis via DXP pathway; isopentenyl diphosphate from 1-deoxy-D-xylulose 5-phosphate: step 6/6. Functionally, catalyzes the conversion of 1-hydroxy-2-methyl-2-(E)-butenyl 4-diphosphate (HMBPP) into a mixture of isopentenyl diphosphate (IPP) and dimethylallyl diphosphate (DMAPP). Acts in the terminal step of the DOXP/MEP pathway for isoprenoid precursor biosynthesis. This chain is 4-hydroxy-3-methylbut-2-enyl diphosphate reductase, found in Chlamydia trachomatis serovar A (strain ATCC VR-571B / DSM 19440 / HAR-13).